The chain runs to 199 residues: Probable GTP-binding protein EngB (199 aa).

Residues 28–199 (DLPEIALAGR…DSWDAILEQV (172 aa)) form the EngB-type G domain. Residues 36–43 (GRSNVGKS), 63–67 (GKTQL), 81–84 (DVPG), 148–151 (TKAD), and 180–182 (FSS) contribute to the GTP site. Mg(2+) contacts are provided by Ser43 and Thr65.

This sequence belongs to the TRAFAC class TrmE-Era-EngA-EngB-Septin-like GTPase superfamily. EngB GTPase family. It depends on Mg(2+) as a cofactor.

Necessary for normal cell division and for the maintenance of normal septation. This chain is Probable GTP-binding protein EngB, found in Streptococcus pyogenes serotype M1.